The primary structure comprises 168 residues: Gastrula zinc finger protein XlCGF7.1 (168 aa).

6 consecutive C2H2-type zinc fingers follow at residues 6 to 28, 34 to 56, 62 to 84, 90 to 112, 118 to 140, and 146 to 168; these read FTCT…QRTH, FTCT…LKCH, FMCT…RKIH, YICT…QTVH, FTCS…QKIH, and FKCN…ERIH.

It belongs to the krueppel C2H2-type zinc-finger protein family.

It is found in the nucleus. Functionally, may be involved in transcriptional regulation. The chain is Gastrula zinc finger protein XlCGF7.1 from Xenopus laevis (African clawed frog).